The following is a 199-amino-acid chain: Putative ATP-dependent Clp protease proteolytic subunit-like (199 aa).

Belongs to the peptidase S14 family. Component of the chloroplastic Clp protease core complex.

It is found in the plastid. The protein localises to the cyanelle. Functionally, has lost the two conserved residues (Ser and His) proposed to be part of the active site. Therefore it could be inactive. In Cyanophora paradoxa, this protein is Putative ATP-dependent Clp protease proteolytic subunit-like (clpP-B).